Reading from the N-terminus, the 401-residue chain is Probable trafficking protein particle complex subunit 13 homolog (401 aa).

Belongs to the TRAPPC13 family.

The polypeptide is Probable trafficking protein particle complex subunit 13 homolog (Caenorhabditis elegans).